Consider the following 202-residue polypeptide: Imidazole glycerol phosphate synthase subunit HisH (202 aa).

In terms of domain architecture, Glutamine amidotransferase type-1 spans 3-202; the sequence is RIVILDYGLG…KILKNFVDMC (200 aa). The Nucleophile role is filled by Cys-79. Active-site residues include His-183 and Glu-185.

As to quaternary structure, heterodimer of HisH and HisF.

The protein resides in the cytoplasm. It catalyses the reaction 5-[(5-phospho-1-deoxy-D-ribulos-1-ylimino)methylamino]-1-(5-phospho-beta-D-ribosyl)imidazole-4-carboxamide + L-glutamine = D-erythro-1-(imidazol-4-yl)glycerol 3-phosphate + 5-amino-1-(5-phospho-beta-D-ribosyl)imidazole-4-carboxamide + L-glutamate + H(+). It carries out the reaction L-glutamine + H2O = L-glutamate + NH4(+). Its pathway is amino-acid biosynthesis; L-histidine biosynthesis; L-histidine from 5-phospho-alpha-D-ribose 1-diphosphate: step 5/9. Its function is as follows. IGPS catalyzes the conversion of PRFAR and glutamine to IGP, AICAR and glutamate. The HisH subunit catalyzes the hydrolysis of glutamine to glutamate and ammonia as part of the synthesis of IGP and AICAR. The resulting ammonia molecule is channeled to the active site of HisF. This is Imidazole glycerol phosphate synthase subunit HisH from Methanosarcina barkeri (strain Fusaro / DSM 804).